The primary structure comprises 165 residues: MSSTFSGDETAPFFGFLGAAAALVFSCMGAAYGTAKSGVGVASMGVMRPELVMKSIVPVVMAGVLGIYGLIIAVIISTGINPKAKSYYLFDGYAHLSSGLACGLAGLSAGMAIGIVGDAGVRANAQQPKLFVGMILILIFAEALALYGLIVGIILSSRAGQSRAE.

Over 1-10 (MSSTFSGDET) the chain is Lumenal. A helical transmembrane segment spans residues 11-33 (APFFGFLGAAAALVFSCMGAAYG). The Cytoplasmic segment spans residues 34–55 (TAKSGVGVASMGVMRPELVMKS). A helical transmembrane segment spans residues 56–76 (IVPVVMAGVLGIYGLIIAVII). Residues 77 to 95 (STGINPKAKSYYLFDGYAH) lie on the Lumenal side of the membrane. Residues 96 to 117 (LSSGLACGLAGLSAGMAIGIVG) traverse the membrane as a helical segment. At 118 to 129 (DAGVRANAQQPK) the chain is on the cytoplasmic side. Residues 130-155 (LFVGMILILIFAEALALYGLIVGIIL) traverse the membrane as a helical segment. Over 156-165 (SSRAGQSRAE) the chain is Lumenal.

The protein belongs to the V-ATPase proteolipid subunit family. V-ATPase is a heteromultimeric enzyme composed of a peripheral catalytic V1 complex (main components: subunits A, B, C, D, E, and F) attached to an integral membrane V0 proton pore complex (main component: the proteolipid protein; which is present as a hexamer that forms the proton-conducting pore).

The protein localises to the vacuole membrane. In terms of biological role, proton-conducting pore forming subunit of the membrane integral V0 complex of vacuolar ATPase. V-ATPase is responsible for acidifying a variety of intracellular compartments in eukaryotic cells. This chain is V-type proton ATPase 16 kDa proteolipid subunit (CVA16-2), found in Gossypium hirsutum (Upland cotton).